The primary structure comprises 218 residues: Redox-sensing transcriptional repressor Rex (218 aa).

The segment at residues Trp-25–Val-64 is a DNA-binding region (H-T-H motif). Position 99 to 104 (Gly-99 to Gly-104) interacts with NAD(+).

This sequence belongs to the transcriptional regulatory Rex family. Homodimer.

It is found in the cytoplasm. Functionally, modulates transcription in response to changes in cellular NADH/NAD(+) redox state. This is Redox-sensing transcriptional repressor Rex from Porphyromonas gingivalis (strain ATCC 33277 / DSM 20709 / CIP 103683 / JCM 12257 / NCTC 11834 / 2561).